The following is a 396-amino-acid chain: S-adenosylmethionine synthase (396 aa).

ATP is bound at residue His16. Mg(2+) is bound at residue Asp18. Position 44 (Glu44) interacts with K(+). L-methionine-binding residues include Glu57 and Gln100. Residues 100–110 (QSVDIAQGVDR) form a flexible loop region. ATP is bound by residues 165-167 (DAK), Asp240, 246-247 (RK), Ala263, and Lys267. Residue Asp240 participates in L-methionine binding. Lys271 serves as a coordination point for L-methionine.

This sequence belongs to the AdoMet synthase family. In terms of assembly, homotetramer; dimer of dimers. Requires Mg(2+) as cofactor. It depends on K(+) as a cofactor.

Its subcellular location is the cytoplasm. The enzyme catalyses L-methionine + ATP + H2O = S-adenosyl-L-methionine + phosphate + diphosphate. It functions in the pathway amino-acid biosynthesis; S-adenosyl-L-methionine biosynthesis; S-adenosyl-L-methionine from L-methionine: step 1/1. In terms of biological role, catalyzes the formation of S-adenosylmethionine (AdoMet) from methionine and ATP. The overall synthetic reaction is composed of two sequential steps, AdoMet formation and the subsequent tripolyphosphate hydrolysis which occurs prior to release of AdoMet from the enzyme. The chain is S-adenosylmethionine synthase from Pseudomonas entomophila (strain L48).